A 268-amino-acid polypeptide reads, in one-letter code: tRNA pseudouridine synthase A (268 aa).

Residue Asp-52 is the Nucleophile of the active site. Residue Tyr-110 participates in substrate binding.

The protein belongs to the tRNA pseudouridine synthase TruA family. Homodimer.

The enzyme catalyses uridine(38/39/40) in tRNA = pseudouridine(38/39/40) in tRNA. Formation of pseudouridine at positions 38, 39 and 40 in the anticodon stem and loop of transfer RNAs. The protein is tRNA pseudouridine synthase A of Prochlorococcus marinus (strain MIT 9312).